The primary structure comprises 232 residues: 2,3,4,5-tetrahydropyridine-2,6-dicarboxylate N-acetyltransferase (232 aa).

It belongs to the transferase hexapeptide repeat family. DapH subfamily.

It carries out the reaction (S)-2,3,4,5-tetrahydrodipicolinate + acetyl-CoA + H2O = L-2-acetamido-6-oxoheptanedioate + CoA. It functions in the pathway amino-acid biosynthesis; L-lysine biosynthesis via DAP pathway; LL-2,6-diaminopimelate from (S)-tetrahydrodipicolinate (acetylase route): step 1/3. In terms of biological role, catalyzes the transfer of an acetyl group from acetyl-CoA to tetrahydrodipicolinate. The protein is 2,3,4,5-tetrahydropyridine-2,6-dicarboxylate N-acetyltransferase of Streptococcus mutans serotype c (strain ATCC 700610 / UA159).